The sequence spans 353 residues: S-adenosylmethionine:tRNA ribosyltransferase-isomerase (353 aa).

This sequence belongs to the QueA family. As to quaternary structure, monomer.

The protein localises to the cytoplasm. The enzyme catalyses 7-aminomethyl-7-carbaguanosine(34) in tRNA + S-adenosyl-L-methionine = epoxyqueuosine(34) in tRNA + adenine + L-methionine + 2 H(+). It functions in the pathway tRNA modification; tRNA-queuosine biosynthesis. In terms of biological role, transfers and isomerizes the ribose moiety from AdoMet to the 7-aminomethyl group of 7-deazaguanine (preQ1-tRNA) to give epoxyqueuosine (oQ-tRNA). The protein is S-adenosylmethionine:tRNA ribosyltransferase-isomerase of Baumannia cicadellinicola subsp. Homalodisca coagulata.